The sequence spans 192 residues: Lipid A acyltransferase PagP (192 aa).

The first 24 residues, 1–24, serve as a signal peptide directing secretion; the sequence is MWLRFCAPALMAWYWVFFPSTSQA. Catalysis depends on residues histidine 63, aspartate 106, and serine 107.

The protein belongs to the lipid A palmitoyltransferase family. Homodimer.

Its subcellular location is the cell outer membrane. The enzyme catalyses a lipid A + a 1,2-diacyl-sn-glycero-3-phosphocholine = a hepta-acyl lipid A + a 2-acyl-sn-glycero-3-phosphocholine. It carries out the reaction a lipid IVA + a 1,2-diacyl-sn-glycero-3-phosphocholine = a lipid IVB + a 2-acyl-sn-glycero-3-phosphocholine. It catalyses the reaction a lipid IIA + a 1,2-diacyl-sn-glycero-3-phosphocholine = a lipid IIB + a 2-acyl-sn-glycero-3-phosphocholine. Transfers a fatty acid residue from the sn-1 position of a phospholipid to the N-linked hydroxyfatty acid chain on the proximal unit of lipid A or its precursors. This Musicola paradisiaca (strain Ech703) (Dickeya paradisiaca) protein is Lipid A acyltransferase PagP.